Here is a 174-residue protein sequence, read N- to C-terminus: Sarcoplasmic calcium-binding protein (174 aa).

N-acetylserine is present on Ser1. 4 consecutive EF-hand domains span residues 3–38 (LWVQ…FAKE), 55–90 (GVWD…EAKS), 91–126 (VVEG…LGLD), and 127–160 (KTMA…FFMN). Ca(2+) is bound by residues Asp16, Asp18, Asp20, and Asp27. The Ca(2+) site is built by Asp104, Asn106, Asp108, Asn110, Glu115, Asp138, Asn140, Asp142, and Glu149.

Like parvalbumins, SCPs seem to be more abundant in fast contracting muscles, but no functional relationship can be established from this distribution. This is Sarcoplasmic calcium-binding protein from Hediste diversicolor (Sandworm).